A 227-amino-acid chain; its full sequence is Lipoprotein-releasing system ATP-binding protein LolD (227 aa).

In terms of domain architecture, ABC transporter spans 6–227 (LVLDDIQKSY…RLDEGVLVSA (222 aa)). Position 43 to 50 (43 to 50 (APSGAGKS)) interacts with ATP.

It belongs to the ABC transporter superfamily. Lipoprotein translocase (TC 3.A.1.125) family. As to quaternary structure, the complex is composed of two ATP-binding proteins (LolD) and two transmembrane proteins (LolC and LolE).

It is found in the cell inner membrane. Part of the ABC transporter complex LolCDE involved in the translocation of mature outer membrane-directed lipoproteins, from the inner membrane to the periplasmic chaperone, LolA. Responsible for the formation of the LolA-lipoprotein complex in an ATP-dependent manner. This chain is Lipoprotein-releasing system ATP-binding protein LolD, found in Jannaschia sp. (strain CCS1).